A 1188-amino-acid polypeptide reads, in one-letter code: DNA-directed RNA polymerase subunit beta (1188 aa).

This sequence belongs to the RNA polymerase beta chain family. In terms of assembly, the RNAP catalytic core consists of 2 alpha, 1 beta, 1 beta' and 1 omega subunit. When a sigma factor is associated with the core the holoenzyme is formed, which can initiate transcription.

It carries out the reaction RNA(n) + a ribonucleoside 5'-triphosphate = RNA(n+1) + diphosphate. Functionally, DNA-dependent RNA polymerase catalyzes the transcription of DNA into RNA using the four ribonucleoside triphosphates as substrates. This chain is DNA-directed RNA polymerase subunit beta, found in Streptococcus pyogenes serotype M3 (strain ATCC BAA-595 / MGAS315).